We begin with the raw amino-acid sequence, 453 residues long: MQVKETVADGLKREFEVNVPAADIDAQVDARLVDLKDKVKLNGFRPGKVPVSHLKRVYGRSVAAETIDKLVRETNDGIFAERGFRLATEPKITMPQDQKVVEDILAGKSDLNYTVAIEVVPTIELADFKSFSVEKPVVDVGDSDVDEAIKRIAEANRAYADKAEGAKAETGDRVTVSFKGTIDGVAFDGGTGEDIPVVIGSGSFIPGFEDQLAGIGVGETRTIKVSFPANYASDTLAGKPAEFETTATKVEAPQDVTIDDEFAKTLGMESLDKLKEAARARLGAEYAGATRLRVKRQLLDRLDETHKFDAPPSLVEQEFEVMWRSINAEMQQNGKSFADEDTTEEAAREEYRKIADRRVRLGLVLSEIGEKNKIQVTDDEVSRAVIERARQMPGREKEVWDFYRSNNEALAQLRAPIYEDKVVDYILELANVTEKKVTREELYKDDDADKTAA.

Residues 171-256 (GDRVTVSFKG…ATKVEAPQDV (86 aa)) enclose the PPIase FKBP-type domain.

The protein belongs to the FKBP-type PPIase family. Tig subfamily.

Its subcellular location is the cytoplasm. It catalyses the reaction [protein]-peptidylproline (omega=180) = [protein]-peptidylproline (omega=0). Its function is as follows. Involved in protein export. Acts as a chaperone by maintaining the newly synthesized protein in an open conformation. Functions as a peptidyl-prolyl cis-trans isomerase. The polypeptide is Trigger factor (Rhodopseudomonas palustris (strain BisB5)).